Here is a 68-residue protein sequence, read N- to C-terminus: Protein transport protein Sec61 subunit gamma (68 aa).

The Cytoplasmic portion of the chain corresponds to 1–32 (MDQFQALIEPARQFSKDSYRLVKRCTKPDRKE). The helical transmembrane segment at 33 to 61 (YQKIAMATAIGFAIMGFIGFFVKLIHIPI) threads the bilayer. Residues 62 to 68 (NNIIVGA) are Extracellular-facing.

It belongs to the SecE/SEC61-gamma family. As to quaternary structure, heterotrimeric complex composed of SEC61-alpha, SEC61-beta and SEC61-gamma. As to expression, expressed in the germline. Expression in the germline is regulated in a sex- and meiotic cycle stage-specific manner. Expressed in somatic tissues including the intestine and somatic gonad. Expressed in the intestine more highly in hermaprodites than in males. In hermaphrodites, weakly expressed in the spermatheca.

The protein resides in the endoplasmic reticulum membrane. Its function is as follows. Required for oocyte development and ovulation. Required for the translocation of secretory and transmembrane proteins into the endoplasmic reticulum in vitro. The polypeptide is Protein transport protein Sec61 subunit gamma (Caenorhabditis elegans).